The chain runs to 158 residues: NADH-quinone oxidoreductase subunit B (158 aa).

Cys-37, Cys-38, Cys-102, and Cys-132 together coordinate [4Fe-4S] cluster.

It belongs to the complex I 20 kDa subunit family. As to quaternary structure, NDH-1 is composed of 14 different subunits. Subunits NuoB, C, D, E, F, and G constitute the peripheral sector of the complex. It depends on [4Fe-4S] cluster as a cofactor.

It is found in the cell inner membrane. It carries out the reaction a quinone + NADH + 5 H(+)(in) = a quinol + NAD(+) + 4 H(+)(out). Its function is as follows. NDH-1 shuttles electrons from NADH, via FMN and iron-sulfur (Fe-S) centers, to quinones in the respiratory chain. Couples the redox reaction to proton translocation (for every two electrons transferred, four hydrogen ions are translocated across the cytoplasmic membrane), and thus conserves the redox energy in a proton gradient. The sequence is that of NADH-quinone oxidoreductase subunit B from Legionella pneumophila (strain Corby).